The following is a 168-amino-acid chain: Photosystem I assembly protein Ycf3 (168 aa).

3 TPR repeats span residues 35 to 68 (AFTY…EIDP), 72 to 105 (SYIL…NPFL), and 120 to 153 (GEQA…TPGN).

The protein belongs to the Ycf3 family.

The protein localises to the plastid. The protein resides in the chloroplast thylakoid membrane. Its function is as follows. Essential for the assembly of the photosystem I (PSI) complex. May act as a chaperone-like factor to guide the assembly of the PSI subunits. The protein is Photosystem I assembly protein Ycf3 of Ranunculus macranthus (Large buttercup).